Reading from the N-terminus, the 118-residue chain is D-dopachrome decarboxylase (118 aa).

Pro2 is subject to N-acetylproline. Lys33 carries the N6-acetyllysine modification.

Belongs to the MIF family. Homotrimer.

The protein resides in the cytoplasm. The catalysed reaction is D-dopachrome + H(+) = 5,6-dihydroxyindole + CO2. Its function is as follows. Tautomerization of D-dopachrome with decarboxylation to give 5,6-dihydroxyindole (DHI). This chain is D-dopachrome decarboxylase (DDT), found in Bos taurus (Bovine).